We begin with the raw amino-acid sequence, 436 residues long: Autophagy-related protein 18 (436 aa).

3 WD repeats span residues 192–232 (AHRS…KLYQ), 237–276 (SMPSRIFSMSFNTTSTLLCVSSSTETIHLFKLSHPTSSPD), and 374–414 (GNNG…GGEG). The short motif at 233-237 (FRRGS) is the L/FRRG motif element. Residues 268-315 (LSHPTSSPDTSPSSPVGRDRSLSQSSSGYSPDRGDLTGDVGSSDFPAR) are disordered. Residues 269 to 282 (SHPTSSPDTSPSSP) are compositionally biased toward low complexity.

This sequence belongs to the WD repeat PROPPIN family. In terms of assembly, component of the PI(3,5)P2 regulatory complex.

It is found in the preautophagosomal structure membrane. The protein localises to the vacuole membrane. The protein resides in the endosome membrane. Its function is as follows. The PI(3,5)P2 regulatory complex regulates both the synthesis and turnover of phosphatidylinositol 3,5-bisphosphate (PtdIns(3,5)P2). Necessary for proper vacuole morphology. Plays an important role in osmotically-induced vacuole fragmentation. Required for cytoplasm to vacuole transport (Cvt) vesicle formation, pexophagy and starvation-induced autophagy. Involved in correct atg9 trafficking to the pre-autophagosomal structure. Might also be involved in premeiotic DNA replication. In Aspergillus fumigatus (strain ATCC MYA-4609 / CBS 101355 / FGSC A1100 / Af293) (Neosartorya fumigata), this protein is Autophagy-related protein 18 (atg18).